The primary structure comprises 261 residues: Cell division protein B (261 aa).

A winged-helix-like fold region spans residues 213 to 261 (SEDMILNYIKTTGGFIDVDYIAKNFDVSKDEVFNVLRRLEEKGLIVLEG).

Interacts with CdvA. Interacts with CdvC.

The protein resides in the cytoplasm. It is found in the nucleoid. In terms of biological role, part of a cell division machinery. The CdvA, CdvB and CdvC proteins polymerize between segregating nucleoids and persist throughout cell division, forming a successively smaller structure during constriction. The protein is Cell division protein B of Sulfolobus acidocaldarius (strain ATCC 33909 / DSM 639 / JCM 8929 / NBRC 15157 / NCIMB 11770).